A 333-amino-acid polypeptide reads, in one-letter code: Fructose-1,6-bisphosphatase class 1 (333 aa).

Glu90, Asp113, Leu115, and Asp116 together coordinate Mg(2+). Residues 116-119 (DGSS), Asn209, Tyr242, and Lys272 contribute to the substrate site. Mg(2+) is bound at residue Glu278.

Belongs to the FBPase class 1 family. As to quaternary structure, homotetramer. It depends on Mg(2+) as a cofactor.

It localises to the cytoplasm. It catalyses the reaction beta-D-fructose 1,6-bisphosphate + H2O = beta-D-fructose 6-phosphate + phosphate. The protein operates within carbohydrate biosynthesis; gluconeogenesis. This chain is Fructose-1,6-bisphosphatase class 1, found in Pasteurella multocida (strain Pm70).